We begin with the raw amino-acid sequence, 101 residues long: NAD(P)H-quinone oxidoreductase subunit 4L, chloroplastic (101 aa).

3 consecutive transmembrane segments (helical) span residues 2–22, 32–52, and 61–81; these read MLEHVLVLGAYLFSIGIYGLI, MCLELILNAVNINLVTFSDFF, and ILSIFVIAIAAAEAAIGLAIV.

The protein belongs to the complex I subunit 4L family. NDH is composed of at least 16 different subunits, 5 of which are encoded in the nucleus.

The protein resides in the plastid. It is found in the chloroplast thylakoid membrane. The enzyme catalyses a plastoquinone + NADH + (n+1) H(+)(in) = a plastoquinol + NAD(+) + n H(+)(out). The catalysed reaction is a plastoquinone + NADPH + (n+1) H(+)(in) = a plastoquinol + NADP(+) + n H(+)(out). NDH shuttles electrons from NAD(P)H:plastoquinone, via FMN and iron-sulfur (Fe-S) centers, to quinones in the photosynthetic chain and possibly in a chloroplast respiratory chain. The immediate electron acceptor for the enzyme in this species is believed to be plastoquinone. Couples the redox reaction to proton translocation, and thus conserves the redox energy in a proton gradient. The protein is NAD(P)H-quinone oxidoreductase subunit 4L, chloroplastic of Buxus microphylla (Littleleaf boxwood).